The primary structure comprises 396 residues: Purine ribonucleoside efflux pump NepI (396 aa).

Residues 1–21 (MSEFIAENRGADAITRPNWSA) are Cytoplasmic-facing. The chain crosses the membrane as a helical span at residues 22–42 (VFSVAFCVACLIIVEFLPVSL). The Periplasmic portion of the chain corresponds to 43-54 (LTPMAQDLGISE). Residues 55–75 (GVAGQSVTVTAFVAMFASLFI) traverse the membrane as a helical segment. Over 76–85 (TQTIQATDRC) the chain is Cytoplasmic. Residues 86 to 106 (YVVILFAVLLTLSCLLVSFAN) traverse the membrane as a helical segment. Ser107 is a topological domain (periplasmic). Residues 108-128 (FSLLLIGRACLGLALGGFWAM) form a helical membrane-spanning segment. The Cytoplasmic segment spans residues 129 to 147 (SASLTMRLVPPRTVPKALS). The chain crosses the membrane as a helical span at residues 148–168 (VIFGAVSIALVIAAPLGSFLG). Residues 169–175 (ELIGWRN) lie on the Periplasmic side of the membrane. Residues 176–196 (VFNAAAVMGVLCIFWIIKSLP) traverse the membrane as a helical segment. The Cytoplasmic portion of the chain corresponds to 197 to 215 (SLPGEPSHQKQNTFRLLQR). A helical membrane pass occupies residues 216–236 (PGVMAGMIAIFMSFAGQFAFF). Residues 237 to 255 (TYIRPVYMNLAGFGVDGLT) lie on the Periplasmic side of the membrane. A helical transmembrane segment spans residues 256-276 (LVLLSFGIASFIGTSLSSFIL). The Cytoplasmic portion of the chain corresponds to 277 to 281 (KRSVK). A helical membrane pass occupies residues 282–302 (LALAGAPLILAVSALVLTLWG). The Periplasmic segment spans residues 303–305 (SDK). A helical membrane pass occupies residues 306-326 (IVATGVAIIWGLTFALVPVGW). The Cytoplasmic segment spans residues 327–343 (STWITRSLADQAEKAGS). A helical membrane pass occupies residues 344–364 (IQVAVIQLANTCGAAIGGYAL). The Periplasmic segment spans residues 365 to 366 (DN). Residues 367-387 (IGLTSPLMLSGTLMLLTALLV) traverse the membrane as a helical segment. Residues 388–396 (TAKVKMKKS) are Cytoplasmic-facing.

Belongs to the major facilitator superfamily. DHA1 family. NepI (TC 2.A.1.2.26) subfamily.

The protein resides in the cell inner membrane. The catalysed reaction is inosine(in) + H(+)(out) = inosine(out) + H(+)(in). The enzyme catalyses guanosine(in) + H(+)(out) = guanosine(out) + H(+)(in). In terms of biological role, involved in the efflux of purine ribonucleosides, such as inosine and guanosine. In Shigella boydii serotype 4 (strain Sb227), this protein is Purine ribonucleoside efflux pump NepI.